Reading from the N-terminus, the 209-residue chain is TVP38/TMEM64 family membrane protein slr0305 (209 aa).

A run of 5 helical transmembrane segments spans residues 15–35 (LGTWAAIAFMLLYTVATVVFL), 39–59 (ILTLGAGVVFGVILGSIYVFI), 110–130 (LSPVFPFNLLNYAYGITNVSL), 134–154 (VIGSLGMIPGTIMYVYIGSLA), and 171–191 (LQWTIRIVGFIATVAVTIYVT).

It belongs to the TVP38/TMEM64 family.

It is found in the cell membrane. The polypeptide is TVP38/TMEM64 family membrane protein slr0305 (Synechocystis sp. (strain ATCC 27184 / PCC 6803 / Kazusa)).